The chain runs to 176 residues: Large ribosomal subunit protein uL6 (176 aa).

This sequence belongs to the universal ribosomal protein uL6 family. Part of the 50S ribosomal subunit.

This protein binds to the 23S rRNA, and is important in its secondary structure. It is located near the subunit interface in the base of the L7/L12 stalk, and near the tRNA binding site of the peptidyltransferase center. The protein is Large ribosomal subunit protein uL6 of Lactobacillus helveticus (strain DPC 4571).